A 250-amino-acid polypeptide reads, in one-letter code: Cruxrhodopsin-3 (250 aa).

The Extracellular portion of the chain corresponds to 1-9 (MPAPEGEAI). A helical transmembrane segment spans residues 10-27 (WLWLGTAGMFLGMLYFIA). Residues 28 to 41 (RGWGETDSRRQKFY) lie on the Cytoplasmic side of the membrane. Residues 42–60 (IATILITAIAFVNYLAMAL) form a helical membrane-spanning segment. Residues 61–77 (GFGLTIVEIAGEQRPIY) are Extracellular-facing. A helical transmembrane segment spans residues 78-94 (WARYSDWLFTTPLLLYD). Residues 95–105 (LGLLAGADRNT) are Cytoplasmic-facing. Residues 106-125 (ISSLVSLDVLMIGTGLVATL) traverse the membrane as a helical segment. At 126–138 (SAGSGVLSAGAER) the chain is on the extracellular side. The chain crosses the membrane as a helical span at residues 139–158 (LVWWGISTAFLLVLLYFLFS). Residues 159–176 (SLSGRVADLPSDTRSTFK) are Cytoplasmic-facing. Residues 177 to 195 (TLRNLVTVVWLVYPVWWLV) form a helical membrane-spanning segment. Over 196-207 (GTEGIGLVGIGI) the chain is Extracellular. Residues 208 to 227 (ETAGFMVIDLVAKVGFGIIL) form a helical membrane-spanning segment. Lysine 220 carries the N6-(retinylidene)lysine modification. Over 228–250 (LRSHGVLDGAAETTGAGATATAD) the chain is Cytoplasmic.

This sequence belongs to the archaeal/bacterial/fungal opsin family. As to quaternary structure, homotrimer. Binds bacterioruberin in the crevice between neighboring subunits.

It localises to the cell membrane. Its function is as follows. Light-driven proton pump. The chain is Cruxrhodopsin-3 (cop3) from Haloarcula vallismortis (Halobacterium vallismortis).